A 136-amino-acid polypeptide reads, in one-letter code: Single-stranded DNA-binding protein 1 (136 aa).

Residues 4–109 enclose the SSB domain; that stretch reads LNKMQLIGNL…IMAKEMQMLG (106 aa). The interval 109–136 is disordered; the sequence is GKKQDNNKVGNARHGDALPADEDDYYDF. A compositionally biased stretch (acidic residues) spans 127-136; sequence PADEDDYYDF.

Homotetramer.

This Xylella fastidiosa (strain 9a5c) protein is Single-stranded DNA-binding protein 1 (ssb1).